The primary structure comprises 523 residues: Calcium uptake protein 3, mitochondrial (523 aa).

The transit peptide at 1 to 6 directs the protein to the mitochondrion; the sequence is MAALRR. Positions 18–48 are disordered; sequence LAPQQPFLSPWGRPAGTAPGMSGRPFSGREE. The EF-hand 1 domain occupies 225-260; sequence KPHAGFRIAFNMFDTDGNEMVDKKEFLVLQEIFRKK. Ca(2+)-binding residues include Asp-238, Asp-240, Asn-242, Met-244, Asp-246, and Glu-249. Residues 414 to 429 enclose the EF-hand 2; degenerate domain; it reads ITFDEFRSFFQFLNNL. The EF-hand 3 domain occupies 463-498; it reads LSPHLVNTVFKIFDVDKDDQLSYKEFIGIMKDRLHR. Residues Asp-476, Asp-478, Asp-480, Gln-482, and Glu-487 each contribute to the Ca(2+) site.

Belongs to the MICU1 family. MICU3 subfamily. As to quaternary structure, heterodimer; disulfide-linked; heterodimerizes with MICU1. Component of the uniplex complex, composed of MCU, EMRE/SMDT1, MICU1 and MICU3 in a 4:4:1:1 stoichiometry.

It is found in the mitochondrion intermembrane space. The protein localises to the mitochondrion inner membrane. Tissue-specific calcium sensor of the mitochondrial calcium uniporter (MCU) channel, which specifically regulates MCU channel activity in the central nervous system and skeletal muscle. Senses calcium level via its EF-hand domains: compared to MICU1 and MICU2, MICU3 has a higher affinity for calcium. MICU1 and MICU3 form a disulfide-linked heterodimer that stimulates and inhibits MCU activity, depending on the concentration of calcium. At low calcium levels, MICU1 occludes the pore of the MCU channel, preventing mitochondrial calcium uptake. At higher calcium levels, calcium-binding to MICU1 and MICU3 induces a conformational change that weakens MCU-MICU1 interactions and moves the MICU1-MICU3 heterodimer away from the pore, allowing calcium permeation through the MCU channel. The high calcium affinity of MICU3 lowers the calcium threshold necessary for calcium permeation through the MCU channel. The MICU1-MICU3 heterodimer promotes flexibility of neurotransmission in neuronal cells by enhancing mitochondrial calcium uptake in presynapses. It is also required to increase mitochondrial calcium uptake in skeletal muscle cells, thereby increasing ATP production. The sequence is that of Calcium uptake protein 3, mitochondrial from Rattus norvegicus (Rat).